Consider the following 259-residue polypeptide: VLIRVLANLLLLQLSYAQESSELVIGGDECDINEHPFLVALHTARSKRFHCAGTLLNKEWVLTAARCDMENMQIYLGLHNISRPNQDQKRRVPKEKHFCVSSKTYTRWDKDIMLIRLKRPVNDGTHIAPLSLPSNPPSVGSVCRIMGWGSITTTKVTYPDVPHCANIKLFDYSVCRDAYKGLPEKSRTLCAGILEGGIDSCKVDNGGPLICNGQFQGIGSWEGHPCAQPLKPALYTNVFEYTDWIEGIIARNTTVTCPP.

An N-terminal signal peptide occupies residues 1–17; it reads VLIRVLANLLLLQLSYA. Positions 18 to 23 are excised as a propeptide; sequence QESSEL. In terms of domain architecture, Peptidase S1 spans 24 to 250; the sequence is VIGGDECDIN…YTDWIEGIIA (227 aa). 6 cysteine pairs are disulfide-bonded: cysteine 30–cysteine 164, cysteine 51–cysteine 67, cysteine 99–cysteine 257, cysteine 143–cysteine 211, cysteine 175–cysteine 190, and cysteine 201–cysteine 226. N-linked (GlcNAc...) asparagine glycosylation occurs at asparagine 80. Asparagine 252 is a glycosylation site (N-linked (GlcNAc...) asparagine).

The protein belongs to the peptidase S1 family. Snake venom subfamily. Expressed by the venom gland.

It is found in the secreted. Its function is as follows. Snake venom serine protease homolog that may act in the hemostasis system of the prey. The sequence is that of Snake venom serine protease homolog rhinocerase 3 from Bitis rhinoceros (West African gaboon viper).